Here is a 385-residue protein sequence, read N- to C-terminus: Serine/threonine-protein kinase SBK1 (385 aa).

The Protein kinase domain maps to 32–297 (YEVIRELGKG…VFAHLGHRWM (266 aa)). ATP contacts are provided by residues 38 to 46 (LGKGTYGKV) and lysine 61. The Proton acceptor role is filled by aspartate 153. Polar residues predominate over residues 328-338 (TLSPTANTSNA). The segment at 328 to 374 (TLSPTANTSNAIEPGSANHFTSMSTNSSVSSTNSYERSARDSPPTSR) is disordered. A compositionally biased stretch (low complexity) spans 348–361 (TSMSTNSSVSSTNS).

Belongs to the protein kinase superfamily. Ser/Thr protein kinase family. Mainly expressed in brain.

It is found in the cytoplasm. It catalyses the reaction L-seryl-[protein] + ATP = O-phospho-L-seryl-[protein] + ADP + H(+). The catalysed reaction is L-threonyl-[protein] + ATP = O-phospho-L-threonyl-[protein] + ADP + H(+). Its function is as follows. May be involved in the control of neuronal proliferation or migration in the brain of embryos. This chain is Serine/threonine-protein kinase SBK1 (sbk1), found in Danio rerio (Zebrafish).